The sequence spans 284 residues: Gap junction beta-1 protein (284 aa).

The Cytoplasmic portion of the chain corresponds to Met1–Arg22. The helical transmembrane segment at Val23 to Gly45 threads the bilayer. At Asp46–Arg75 the chain is on the extracellular side. Residues Leu76–Val95 form a helical membrane-spanning segment. Residues Ala96–Thr130 are Cytoplasmic-facing. A helical transmembrane segment spans residues Leu131 to Phe153. Residues Tyr154 to Thr191 lie on the Extracellular side of the membrane. The helical transmembrane segment at Val192–Phe214 threads the bilayer. Residues Arg215–Cys284 lie on the Cytoplasmic side of the membrane. 4 positions are modified to phosphoserine: Ser233, Ser259, Ser267, and Ser278.

This sequence belongs to the connexin family. Beta-type (group I) subfamily. In terms of assembly, a connexon is composed of a hexamer of connexins. Interacts with CNST.

The protein resides in the cell membrane. Its subcellular location is the cell junction. It is found in the gap junction. One gap junction consists of a cluster of closely packed pairs of transmembrane channels, the connexons, through which materials of low MW diffuse from one cell to a neighboring cell. The chain is Gap junction beta-1 protein (GJB1) from Bos taurus (Bovine).